The primary structure comprises 506 residues: Trans-cinnamate 4-monooxygenase C4H1 (506 aa).

Short sequence motifs (nuclear localization signal) lie at residues 161-168 and 247-254; these read VKKMPESA and QRRLQLFK. Cys-448 is a heme binding site.

Belongs to the cytochrome P450 family. It depends on heme as a cofactor.

The protein localises to the nucleus. It carries out the reaction (E)-cinnamate + reduced [NADPH--hemoprotein reductase] + O2 = (E)-4-coumarate + oxidized [NADPH--hemoprotein reductase] + H2O + H(+). The protein operates within phenylpropanoid metabolism; trans-4-coumarate biosynthesis; trans-4-coumarate from trans-cinnamate: step 1/1. Functionally, component of the floral volatile benzenoid/phenylpropanoid (FVBP) biosynthetic pathway that controls carbon flux to pigments essential for pollination or UV protection, to numerous pytoalexins synthesized by plants when challenged by pathogens, and to lignins. The polypeptide is Trans-cinnamate 4-monooxygenase C4H1 (Petunia hybrida (Petunia)).